Reading from the N-terminus, the 585-residue chain is Cytochrome c lysine N-methyltransferase 1 (585 aa).

Residues 18 to 273 (KSLSLKPSTI…KPIEVFISYS (256 aa)) form the SET domain. Residues 186–288 (LNLSDIKHLY…FSMLVTYGFT (103 aa)) form an SET-like region.

Belongs to the class V-like SAM-binding methyltransferase superfamily.

The protein resides in the cytoplasm. It localises to the cytosol. It catalyses the reaction L-lysyl-[cytochrome c] + S-adenosyl-L-methionine = N(6)-methyl-L-lysyl-[cytochrome c] + S-adenosyl-L-homocysteine + H(+). In terms of biological role, methyltransferase which mediates trimethylation of 'Lys-78' of cytochrome c (CYC1). This chain is Cytochrome c lysine N-methyltransferase 1 (CTM1), found in Saccharomyces cerevisiae (strain ATCC 204508 / S288c) (Baker's yeast).